Consider the following 75-residue polypeptide: Neuropeptide-like protein 31 (75 aa).

Residues 1–22 (MISTSSILVLVVLLACFMAANA) form the signal peptide. Tyrosine amide occurs at positions 29, 39, 49, 56, and 64. A Tryptophan amide modification is found at W73.

It belongs to the YARP (YGGW-amide related peptide) family. Expressed in hypoderm.

The protein resides in the secreted. In terms of biological role, antimicrobial peptides that have antifungal activity against D.coniospora. Has weak antibacterial activity against Gram-positive bacteria M.luteus and Gram-negative E.coli. The chain is Neuropeptide-like protein 31 (nlp-31) from Caenorhabditis elegans.